The primary structure comprises 1019 residues: Insulin-degrading enzyme (1019 aa).

H108 contributes to the Zn(2+) binding site. E111 (proton acceptor) is an active-site residue. Positions 112 and 189 each coordinate Zn(2+). K192 carries the N6-succinyllysine modification. 359–363 provides a ligand contact to substrate; sequence LVGGQ. R429 provides a ligand contact to ATP. N6-succinyllysine is present on K697. The short motif at 853–858 is the SlyX motif element; sequence EKPPHY. Residue 895-901 participates in ATP binding; that stretch reads DKPKKLS.

The protein belongs to the peptidase M16 family. In terms of assembly, homodimer. Can also form homotetramers. The cofactor is Zn(2+). Detected in brain and liver (at protein level). Detected in liver.

The protein resides in the cytoplasm. It is found in the cytosol. The protein localises to the cell membrane. Its subcellular location is the secreted. The catalysed reaction is Degradation of insulin, glucagon and other polypeptides. No action on proteins.. Activated by ATP, other nucleotide triphosphates and small peptides. Inhibited by bacitracin. Functionally, plays a role in the cellular breakdown of insulin, APP peptides, IAPP peptides, natriuretic peptides, glucagon, bradykinin, kallidin, and other peptides, and thereby plays a role in intercellular peptide signaling. Substrate binding induces important conformation changes, making it possible to bind and degrade larger substrates, such as insulin. Contributes to the regulation of peptide hormone signaling cascades and regulation of blood glucose homeostasis via its role in the degradation of insulin, glucagon and IAPP. Plays a role in the degradation and clearance of APP-derived amyloidogenic peptides that are secreted by neurons and microglia. Degrades the natriuretic peptides ANP, BNP and CNP, inactivating their ability to raise intracellular cGMP. Also degrades an aberrant frameshifted 40-residue form of NPPA (fsNPPA) which is associated with familial atrial fibrillation in heterozygous patients. Involved in antigen processing. Produces both the N terminus and the C terminus of MAGEA3-derived antigenic peptide (EVDPIGHLY) that is presented to cytotoxic T lymphocytes by MHC class I. The polypeptide is Insulin-degrading enzyme (Ide) (Mus musculus (Mouse)).